Reading from the N-terminus, the 99-residue chain is Prostate and testis expressed protein 14 (99 aa).

The N-terminal stretch at 1–21 is a signal peptide; it reads MGKNILLLLLGLSFVIGFLQA. Residues 22–99 form the UPAR/Ly6 domain; that stretch reads LRCLECDMLN…CHDQSLCNEF (78 aa). Disulfide bonds link Cys24–Cys51, Cys27–Cys36, Cys43–Cys69, Cys73–Cys89, and Cys90–Cys96. Asn40 is a glycosylation site (N-linked (GlcNAc...) asparagine). Asn75 and Asn82 each carry an N-linked (GlcNAc...) asparagine glycan.

Belongs to the PATE family. As to quaternary structure, monomer.

It is found in the secreted. The sequence is that of Prostate and testis expressed protein 14 from Rattus norvegicus (Rat).